The primary structure comprises 493 residues: C2H2-type transcription factor ffmA (493 aa).

The segment covering 1–18 (MPMPQYTMQPQYPVSQPH) has biased composition (low complexity). 3 disordered regions span residues 1–50 (MPMP…SRYP), 68–140 (TTVG…YPDG), and 164–202 (EPPRTQVVGSQGRRGILPSVPGRVAPVTNGVNGTAKNTT). Composition is skewed to polar residues over residues 69 to 79 (TVGSLPPSTFL) and 192 to 202 (NGVNGTAKNTT). Residues 212–234 (FPCPHCNKTYLHAKHLKRHLLRH) form a C2H2-type 1 zinc finger. The C2H2-type 2; degenerate zinc-finger motif lies at 240-265 (YMCVLCKDTFSRSDILKRHFQKCSIR). Polar residues-rich tracts occupy residues 288-307 (QAAANTAKSLQEEVSSTVPP) and 484-493 (ASTTLGGDGK). Disordered regions lie at residues 288–316 (QAAANTAKSLQEEVSSTVPPSNGIAGATF) and 468–493 (TTTAGPQEGGMNGLYLASTTLGGDGK).

It belongs to the krueppel C2H2-type zinc-finger protein family.

The protein localises to the nucleus. Functionally, transcription factor that acts in coordination with atrR to regulate the expression of the ABC-type multidrug transporter abcG1 and thus plays a role in azole susceptibility. Regulates the expression of genes involved in fermentation. Is able to promote expression from the yeast FLO11 promoter. The sequence is that of C2H2-type transcription factor ffmA from Aspergillus fumigatus (strain CBS 144.89 / FGSC A1163 / CEA10) (Neosartorya fumigata).